The primary structure comprises 264 residues: MSDKQFIETQGQRLYEALRSARTLAPLTDNHPEMTVEDAYHISLHMLRLREASGERVIGKKIGVTSKPVQDMLNVHQPDFGFLTDSMEYEDGAAVSLKAAGLIQPRAEGEIAFMLKKDLQGPGVTREDVLAATEWVAPCFEIVDSRINDWKIKIQDTVADNASCGVFVIGKQHTDPASLDLAAAAMQMSKNGQPAGSGLGSAVQGHPAEAVAWLANTLGAFGIPFKAGEVILSGSLAPLVPAAAGDRFDMVIEGMGTCSIQFTE.

This sequence belongs to the hydratase/decarboxylase family.

The catalysed reaction is (2Z,4Z)-2-hydroxyhexa-2,4-dienoate + H2O = 4-hydroxy-2-oxohexanoate. Involved in the catatabolism of testosterone. Catalyzes the hydration of 2-hydroxyhexa-2,4-dienoic acid to 4-hydroxy-2-oxohexanoic acid. The polypeptide is 2-hydroxyhexa-2,4-dienoate hydratase (tesE) (Comamonas testosteroni (Pseudomonas testosteroni)).